We begin with the raw amino-acid sequence, 307 residues long: Elongation factor Ts, mitochondrial (307 aa).

The N-terminal 19 residues, 1-19 (MIFTRLTRFVGHGTGLRLY), are a transit peptide targeting the mitochondrion.

Belongs to the EF-Ts family.

It localises to the mitochondrion. Functionally, associates with the EF-Tu.GDP complex and induces the exchange of GDP to GTP. It remains bound to the aminoacyl-tRNA.EF-Tu.GTP complex up to the GTP hydrolysis stage on the ribosome. This Aedes aegypti (Yellowfever mosquito) protein is Elongation factor Ts, mitochondrial.